Consider the following 296-residue polypeptide: Indole-3-glycerol phosphate synthase (296 aa).

Belongs to the TrpC family.

The catalysed reaction is 1-(2-carboxyphenylamino)-1-deoxy-D-ribulose 5-phosphate + H(+) = (1S,2R)-1-C-(indol-3-yl)glycerol 3-phosphate + CO2 + H2O. It participates in amino-acid biosynthesis; L-tryptophan biosynthesis; L-tryptophan from chorismate: step 4/5. The polypeptide is Indole-3-glycerol phosphate synthase (Microcystis aeruginosa (strain NIES-843 / IAM M-2473)).